The chain runs to 405 residues: Acetate kinase (405 aa).

Residue asparagine 7 coordinates Mg(2+). Lysine 14 is an ATP binding site. Arginine 90 contributes to the substrate binding site. Aspartate 147 (proton donor/acceptor) is an active-site residue. Residues 207-211 (HLGNG), 282-284 (DMR), and 330-334 (GVGEN) contribute to the ATP site. Residue glutamate 383 participates in Mg(2+) binding.

This sequence belongs to the acetokinase family. In terms of assembly, homodimer. Mg(2+) is required as a cofactor. It depends on Mn(2+) as a cofactor.

The protein resides in the cytoplasm. It catalyses the reaction acetate + ATP = acetyl phosphate + ADP. The protein operates within metabolic intermediate biosynthesis; acetyl-CoA biosynthesis; acetyl-CoA from acetate: step 1/2. Functionally, catalyzes the formation of acetyl phosphate from acetate and ATP. Can also catalyze the reverse reaction. In Pseudothermotoga lettingae (strain ATCC BAA-301 / DSM 14385 / NBRC 107922 / TMO) (Thermotoga lettingae), this protein is Acetate kinase.